Consider the following 181-residue polypeptide: Probable calcium-binding protein CML43 (181 aa).

3 consecutive EF-hand domains span residues 24 to 59 (LNAL…LGLD), 107 to 142 (SPES…LGLP), and 145 to 180 (GEIE…VVVP). Ca(2+) contacts are provided by aspartate 37, asparagine 39, aspartate 41, glutamate 48, aspartate 120, aspartate 122, aspartate 124, glutamate 131, aspartate 158, asparagine 160, aspartate 162, arginine 164, and glutamate 169.

In terms of tissue distribution, expressed specifically in roots.

Functionally, calcium-binding protein that may mediate calcium-dependent signal during plant defense response. The sequence is that of Probable calcium-binding protein CML43 (CML43) from Arabidopsis thaliana (Mouse-ear cress).